A 158-amino-acid polypeptide reads, in one-letter code: Proteinase inhibitor type-2 (158 aa).

The first 24 residues, 1 to 24 (MAIHKEVSFLAYLLVLGMLLFVSA), serve as a signal peptide directing secretion. Tandem repeats lie at residues 29–86 (DAKA…HPKN) and 87–146 (PKAC…IEPK). 8 cysteine pairs are disulfide-bonded: Cys33–Cys121, Cys37–Cys117, Cys45–Cys127, Cys57–Cys94, Cys60–Cys78, Cys61–Cys90, Cys67–Cys103, and Cys120–Cys138.

The protein belongs to the protease inhibitor I20 (potato type II proteinase inhibitor) family.

In Solanum tuberosum (Potato), this protein is Proteinase inhibitor type-2.